The primary structure comprises 396 residues: Na(+)/H(+) antiporter NhaA 1 (396 aa).

11 consecutive transmembrane segments (helical) span residues 18 to 38 (LLLI…LSWL), 60 to 80 (LLLW…GLEV), 95 to 115 (IALP…IYTG), 126 to 146 (GWAI…ALLG), 155 to 175 (LFLL…IALF), 178 to 198 (ADLS…LFIL), 201 to 221 (TGVT…ICVL), 262 to 282 (VAYG…LAGI), 295 to 315 (IAAG…WIGV), 333 to 353 (GMAV…TLAL), and 362 to 382 (AARL…YYLL).

It belongs to the NhaA Na(+)/H(+) (TC 2.A.33) antiporter family.

It localises to the cell inner membrane. The catalysed reaction is Na(+)(in) + 2 H(+)(out) = Na(+)(out) + 2 H(+)(in). Functionally, na(+)/H(+) antiporter that extrudes sodium in exchange for external protons. This Syntrophotalea carbinolica (strain DSM 2380 / NBRC 103641 / GraBd1) (Pelobacter carbinolicus) protein is Na(+)/H(+) antiporter NhaA 1.